A 185-amino-acid polypeptide reads, in one-letter code: Elongation factor P (185 aa).

It belongs to the elongation factor P family.

It is found in the cytoplasm. It functions in the pathway protein biosynthesis; polypeptide chain elongation. Functionally, involved in peptide bond synthesis. Stimulates efficient translation and peptide-bond synthesis on native or reconstituted 70S ribosomes in vitro. Probably functions indirectly by altering the affinity of the ribosome for aminoacyl-tRNA, thus increasing their reactivity as acceptors for peptidyl transferase. The polypeptide is Elongation factor P (Streptococcus pyogenes serotype M4 (strain MGAS10750)).